A 92-amino-acid polypeptide reads, in one-letter code: Small ribosomal subunit protein uS19 (92 aa).

The protein belongs to the universal ribosomal protein uS19 family.

Protein S19 forms a complex with S13 that binds strongly to the 16S ribosomal RNA. This chain is Small ribosomal subunit protein uS19, found in Gloeothece citriformis (strain PCC 7424) (Cyanothece sp. (strain PCC 7424)).